The sequence spans 242 residues: MSEWLFDLGNSRFKYAPLHGNRAGQVQAWAHGAEAMDAAALAALPSGRIAYVASVAAPALTQPMIACLQERFTQVRIVRTTAECAGVRIAYADPSRFGVDRFLALLGARGDAPVLVAGVGTALTIDVLGADGLHHGGRIAASPTTMREALHARAVQLPASGGDYVELAIDTDDALTSGCDGAAVALIERSLQHAQRSLGVPVRLLVHGGGAPPLLPLLPDASFRAALVLDGLATWATAAASP.

Position 7–14 (7–14 (DLGNSRFK)) interacts with ATP. Substrate is bound by residues Tyr91 and 98-101 (GVDR). The Proton acceptor role is filled by Asp100. Thr121 is a binding site for ATP. Residue Thr171 coordinates substrate.

This sequence belongs to the type III pantothenate kinase family. In terms of assembly, homodimer. Requires NH4(+) as cofactor. The cofactor is K(+).

The protein resides in the cytoplasm. It catalyses the reaction (R)-pantothenate + ATP = (R)-4'-phosphopantothenate + ADP + H(+). Its pathway is cofactor biosynthesis; coenzyme A biosynthesis; CoA from (R)-pantothenate: step 1/5. Functionally, catalyzes the phosphorylation of pantothenate (Pan), the first step in CoA biosynthesis. In Xanthomonas euvesicatoria pv. vesicatoria (strain 85-10) (Xanthomonas campestris pv. vesicatoria), this protein is Type III pantothenate kinase.